The following is a 217-amino-acid chain: tRNA (guanine-N(7)-)-methyltransferase (217 aa).

Residues glutamate 56, glutamate 81, aspartate 108, and aspartate 130 each coordinate S-adenosyl-L-methionine. Aspartate 130 is an active-site residue. 2 residues coordinate substrate: lysine 134 and aspartate 166.

The protein belongs to the class I-like SAM-binding methyltransferase superfamily. TrmB family.

It carries out the reaction guanosine(46) in tRNA + S-adenosyl-L-methionine = N(7)-methylguanosine(46) in tRNA + S-adenosyl-L-homocysteine. Its pathway is tRNA modification; N(7)-methylguanine-tRNA biosynthesis. In terms of biological role, catalyzes the formation of N(7)-methylguanine at position 46 (m7G46) in tRNA. The polypeptide is tRNA (guanine-N(7)-)-methyltransferase (Neorickettsia sennetsu (strain ATCC VR-367 / Miyayama) (Ehrlichia sennetsu)).